The following is a 365-amino-acid chain: N5-carboxyaminoimidazole ribonucleotide synthase (365 aa).

ATP is bound by residues R93, K132, 137–143 (GYDGKGQ), 168–171 (EEFV), E176, H199, and 249–250 (NE). The 183-residue stretch at 97–279 (KLFLKKHGFP…QFENLLRAIT (183 aa)) folds into the ATP-grasp domain.

Belongs to the PurK/PurT family. As to quaternary structure, homodimer.

The enzyme catalyses 5-amino-1-(5-phospho-beta-D-ribosyl)imidazole + hydrogencarbonate + ATP = 5-carboxyamino-1-(5-phospho-D-ribosyl)imidazole + ADP + phosphate + 2 H(+). It participates in purine metabolism; IMP biosynthesis via de novo pathway; 5-amino-1-(5-phospho-D-ribosyl)imidazole-4-carboxylate from 5-amino-1-(5-phospho-D-ribosyl)imidazole (N5-CAIR route): step 1/2. In terms of biological role, catalyzes the ATP-dependent conversion of 5-aminoimidazole ribonucleotide (AIR) and HCO(3)(-) to N5-carboxyaminoimidazole ribonucleotide (N5-CAIR). The sequence is that of N5-carboxyaminoimidazole ribonucleotide synthase from Aquifex aeolicus (strain VF5).